Reading from the N-terminus, the 47-residue chain is uncharacterized protein (47 aa).

A disordered region spans residues 19 to 47 (EKVLKNQNPDRLSHMTDKNAQPKSKEKEE).

This is an uncharacterized protein from Bacillus subtilis (strain 168).